The sequence spans 146 residues: Small ribosomal subunit protein eS17 (146 aa).

The protein belongs to the eukaryotic ribosomal protein eS17 family. Component of the small ribosomal subunit (SSU). Mature N.crassa ribosomes consist of a small (40S) and a large (60S) subunit. The 40S small subunit contains 1 molecule of ribosomal RNA (18S rRNA) and at least 32 different proteins. The large 60S subunit contains 3 rRNA molecules (26S, 5.8S and 5S rRNA) and at least 42 different proteins.

The protein localises to the cytoplasm. Its function is as follows. Component of the ribosome, a large ribonucleoprotein complex responsible for the synthesis of proteins in the cell. The small ribosomal subunit (SSU) binds messenger RNAs (mRNAs) and translates the encoded message by selecting cognate aminoacyl-transfer RNA (tRNA) molecules. The large subunit (LSU) contains the ribosomal catalytic site termed the peptidyl transferase center (PTC), which catalyzes the formation of peptide bonds, thereby polymerizing the amino acids delivered by tRNAs into a polypeptide chain. The nascent polypeptides leave the ribosome through a tunnel in the LSU and interact with protein factors that function in enzymatic processing, targeting, and the membrane insertion of nascent chains at the exit of the ribosomal tunnel. This chain is Small ribosomal subunit protein eS17 (rps-17), found in Neurospora crassa (strain ATCC 24698 / 74-OR23-1A / CBS 708.71 / DSM 1257 / FGSC 987).